The chain runs to 43 residues: CTTGPCCRQCKLKPAGTTCWRTSVSSHYCTGRSCECPSYPGNG.

4 disulfide bridges follow: Cys1–Cys10, Cys6–Cys29, Cys7–Cys34, and Cys19–Cys36. The Disintegrin domain maps to 1-43 (CTTGPCCRQCKLKPAGTTCWRTSVSSHYCTGRSCECPSYPGNG). The Cell attachment site; atypical (RTS) signature appears at 21–23 (RTS).

The protein belongs to the disintegrin family. Short disintegrin subfamily. In terms of assembly, monomer. Expressed by the venom gland.

The protein localises to the secreted. In terms of biological role, specifically interacts with the alpha-1/beta-1 integrin (ITGA1/ITGB1). Exhibits highly inhibitory effects on cell adhesion and cell migration to collagens I and IV. Also shows in vivo anti-angiogenic activity. This Cerastes vipera (Sahara sand viper) protein is Disintegrin CV.